The chain runs to 339 residues: Glucokinase (339 aa).

16–21 (GDIGGT) contributes to the ATP binding site.

This sequence belongs to the bacterial glucokinase family.

Its subcellular location is the cytoplasm. The catalysed reaction is D-glucose + ATP = D-glucose 6-phosphate + ADP + H(+). The chain is Glucokinase from Sinorhizobium fredii (strain NBRC 101917 / NGR234).